A 103-amino-acid chain; its full sequence is Large ribosomal subunit protein bL21 (103 aa).

Belongs to the bacterial ribosomal protein bL21 family. Part of the 50S ribosomal subunit. Contacts protein L20.

Functionally, this protein binds to 23S rRNA in the presence of protein L20. The sequence is that of Large ribosomal subunit protein bL21 from Maridesulfovibrio salexigens (strain ATCC 14822 / DSM 2638 / NCIMB 8403 / VKM B-1763) (Desulfovibrio salexigens).